The following is a 138-amino-acid chain: ATP synthase epsilon chain (138 aa).

The protein belongs to the ATPase epsilon chain family. As to quaternary structure, F-type ATPases have 2 components, CF(1) - the catalytic core - and CF(0) - the membrane proton channel. CF(1) has five subunits: alpha(3), beta(3), gamma(1), delta(1), epsilon(1). CF(0) has three main subunits: a, b and c.

It localises to the cell membrane. In terms of biological role, produces ATP from ADP in the presence of a proton gradient across the membrane. The sequence is that of ATP synthase epsilon chain from Streptococcus suis (strain 98HAH33).